Reading from the N-terminus, the 320-residue chain is tRNA dimethylallyltransferase (320 aa).

Residue 17-24 (GPTASGKT) participates in ATP binding. 19–24 (TASGKT) serves as a coordination point for substrate. Interaction with substrate tRNA regions lie at residues 42 to 45 (DSAL), 166 to 170 (QRIQR), and 249 to 254 (RCVGYR).

This sequence belongs to the IPP transferase family. As to quaternary structure, monomer. Mg(2+) is required as a cofactor.

It carries out the reaction adenosine(37) in tRNA + dimethylallyl diphosphate = N(6)-dimethylallyladenosine(37) in tRNA + diphosphate. Functionally, catalyzes the transfer of a dimethylallyl group onto the adenine at position 37 in tRNAs that read codons beginning with uridine, leading to the formation of N6-(dimethylallyl)adenosine (i(6)A). The protein is tRNA dimethylallyltransferase of Herminiimonas arsenicoxydans.